The sequence spans 462 residues: Amino-acid permease AapA (462 aa).

A run of 12 helical transmembrane segments spans residues 27 to 47 (LMAIGGAIGTGLFLGSGKSIH), 48 to 68 (FAGPSILFAYLITGVFCFFIM), 96 to 116 (AAFITGWTYWFCWISLAMADL), 134 to 154 (LPGLLALIILLIMNLATVKLF), 160 to 180 (WFALIKVIAILALIVTGILLI), 209 to 229 (GFILSFQMVVFAFVGIELVGL), 252 to 272 (ILLFYVGALFVIMCIYPWNVL), 279 to 299 (FVQVFSAVGIVVAASLINFVV), 343 to 363 (ALFFSSIAILIGVSLNYLMPE), 366 to 386 (FTLITSVSTICFIFIWGITVI), 410 to 430 (PLSNYLTLAFLAFILVILALA), and 435 to 455 (IALFVTPVWFVLLIILYKVQT).

It belongs to the amino acid-polyamine-organocation (APC) superfamily.

It localises to the cell membrane. In terms of biological role, probable amino-acid or metabolite transport protein. This chain is Amino-acid permease AapA (aapA), found in Bacillus subtilis (strain 168).